Consider the following 292-residue polypeptide: Protease HtpX (292 aa).

2 helical membrane passes run 5–25 (IFLF…VMSV) and 34–54 (SGLL…SLLL). A Zn(2+)-binding site is contributed by His140. The active site involves Glu141. His144 is a binding site for Zn(2+). 2 consecutive transmembrane segments (helical) span residues 155-175 (LLQG…GGII) and 193-213 (IIVF…AMWF). Glu218 is a binding site for Zn(2+).

Belongs to the peptidase M48B family. Zn(2+) serves as cofactor.

It localises to the cell inner membrane. This chain is Protease HtpX, found in Xanthomonas oryzae pv. oryzae (strain MAFF 311018).